A 450-amino-acid polypeptide reads, in one-letter code: UDP-N-acetylmuramoylalanine--D-glutamate ligase (450 aa).

119-125 (GSNGKTT) serves as a coordination point for ATP.

It belongs to the MurCDEF family.

It is found in the cytoplasm. It catalyses the reaction UDP-N-acetyl-alpha-D-muramoyl-L-alanine + D-glutamate + ATP = UDP-N-acetyl-alpha-D-muramoyl-L-alanyl-D-glutamate + ADP + phosphate + H(+). The protein operates within cell wall biogenesis; peptidoglycan biosynthesis. Its function is as follows. Cell wall formation. Catalyzes the addition of glutamate to the nucleotide precursor UDP-N-acetylmuramoyl-L-alanine (UMA). The protein is UDP-N-acetylmuramoylalanine--D-glutamate ligase of Bacillus cereus (strain ATCC 10987 / NRS 248).